We begin with the raw amino-acid sequence, 224 residues long: Toxin coregulated pilin (224 aa).

Positions 1 to 25 (MQLLKQLFKKKFVKEEHDKKTGQEG) are cleaved as a propeptide — atypical leader sequence. An N-methylmethionine modification is found at Met-26. Residues 26–46 (MTLLEVIIVLGIMGVVSAGVV) form a helical membrane-spanning segment. A disulfide bond links Cys-145 and Cys-211.

It localises to the fimbrium. Its subcellular location is the membrane. Its function is as follows. Major component of the toxin co-regulated pilus (tcp) which is a type IV pilus essential for bacterial aggregation and subsequent colonization in the host small intestine. This is Toxin coregulated pilin (tcpA) from Vibrio cholerae.